Here is a 336-residue protein sequence, read N- to C-terminus: Inactive serine/threonine-protein kinase PLK5 (336 aa).

The Protein kinase; truncated domain maps to 1 to 65 (MYTVLTGTPP…LDHLLQDDFF (65 aa)). Disordered regions lie at residues 109-135 (PCPF…WDGE) and 224-245 (GRTG…LPTP). Residues 255–336 (LLRFLASEHA…HHALRMLQSI (82 aa)) form the POLO box domain.

Belongs to the protein kinase superfamily. Ser/Thr protein kinase family. CDC5/Polo subfamily. As to expression, expressed in the brain, neurons and glial cells. Also expressed in highly differentiated cells, such as the serous acini in the parotid gland, distal and proximal tubules of the kidney, tubules of the seminal gland, Kupffer cells and some hepatocytes in the liver, and some cells in the germinal center of lymph nodes (at protein level).

Its subcellular location is the nucleus. The protein resides in the nucleolus. It localises to the cytoplasm. Functionally, inactive serine/threonine-protein kinase that plays a role in cell cycle progression and neuronal differentiation. In Homo sapiens (Human), this protein is Inactive serine/threonine-protein kinase PLK5 (PLK5).